The chain runs to 309 residues: THAP domain-containing protein 7 (309 aa).

A THAP-type zinc finger spans residues 1-93 (MPRHCSAAGC…LKEGAVPTIF (93 aa)). Residues 158 to 209 (TLPASPAGRLEPGLSSPFSDLLGPLGAQADEAGCSAQPSPERQPSPLEPRPV) form a disordered region. S162 is modified (phosphoserine). The segment covering 198 to 209 (ERQPSPLEPRPV) has biased composition (pro residues). S210 carries the phosphoserine modification. Residues 229 to 232 (EHSY) carry the HCFC1-binding motif (HBM) motif.

As to quaternary structure, forms homodimers. Interacts with HDAC3 and nuclear hormone receptor corepressors. Interacts via HBM with HCFC1.

It localises to the nucleus. The protein resides in the chromosome. Functionally, chromatin-associated, histone tail-binding protein that represses transcription via recruitment of HDAC3 and nuclear hormone receptor corepressors. The sequence is that of THAP domain-containing protein 7 (THAP7) from Homo sapiens (Human).